The sequence spans 666 residues: Mitogen-activated protein kinase kinase kinase ANP1 (666 aa).

Positions 69 to 331 (WRKGQLIGRG…ASELLKHPFV (263 aa)) constitute a Protein kinase domain. Residues 75–83 (IGRGAFGTV) and K98 contribute to the ATP site. Positions 101-131 (LIAANFASKEKTQAHIQELEEEVKLLKNLSH) form a coiled coil. Glycyl lysine isopeptide (Lys-Gly) (interchain with G-Cter in ubiquitin) cross-links involve residues K109 and K111. D197 (proton acceptor) is an active-site residue. Residues 452 to 464 (KFDESPGNGEKES) are compositionally biased toward basic and acidic residues. 3 disordered regions span residues 452–481 (KFDESPGNGEKESTMSMECDQPSYSEDDDE), 536–592 (GFLK…DGVS), and 635–666 (QEIMRQAGLGSSPRDRGMSRQREKSRFASPGK). Residues 538 to 558 (LKLPPKSRSPSRGPLGGSPSR) are compositionally biased toward low complexity. A compositionally biased stretch (polar residues) spans 560-569 (TDATSCSKSP). The stretch at 620–643 (KKWKEELDQELERKRQEIMRQAGL) forms a coiled coil. Residues 647–660 (PRDRGMSRQREKSR) show a composition bias toward basic and acidic residues.

Belongs to the protein kinase superfamily. STE Ser/Thr protein kinase family. MAP kinase kinase kinase subfamily. Expressed in roots, inflorescence stems, flower buds and flowers. Low amount in rosette and cauline leaves.

It catalyses the reaction L-seryl-[protein] + ATP = O-phospho-L-seryl-[protein] + ADP + H(+). It carries out the reaction L-threonyl-[protein] + ATP = O-phospho-L-threonyl-[protein] + ADP + H(+). May be involved in an oxidative stress-mediated signaling cascade that phosphorylates downstream MAP kinases MPK3 and MPK6. May suppress auxin signaling that promotes cell cycle. Functionally redundant to ANP2 and ANP3 in the positive regulation of cytokinesis. The protein is Mitogen-activated protein kinase kinase kinase ANP1 (ANP1) of Arabidopsis thaliana (Mouse-ear cress).